Consider the following 550-residue polypeptide: Hydroxylamine reductase (550 aa).

The [4Fe-4S] cluster site is built by Cys7, Cys10, Cys19, and Cys25. Hybrid [4Fe-2O-2S] cluster-binding residues include His244, Glu268, Cys312, Cys405, Cys433, Cys458, Glu493, and Lys495. Cysteine persulfide is present on Cys405.

Belongs to the HCP family. Requires [4Fe-4S] cluster as cofactor. It depends on hybrid [4Fe-2O-2S] cluster as a cofactor.

It localises to the cytoplasm. The enzyme catalyses A + NH4(+) + H2O = hydroxylamine + AH2 + H(+). Its function is as follows. Catalyzes the reduction of hydroxylamine to form NH(3) and H(2)O. The polypeptide is Hydroxylamine reductase (Porphyromonas gingivalis (strain ATCC 33277 / DSM 20709 / CIP 103683 / JCM 12257 / NCTC 11834 / 2561)).